We begin with the raw amino-acid sequence, 204 residues long: Putative AgrB-like protein (204 aa).

The next 5 membrane-spanning stretches (helical) occupy residues 52–74, 87–107, 111–131, 151–168, and 173–190; these read YGIALVTGLLLQTVTVHLSYLWL, LNCTLISLLMFVLAPFVFQNI, NWIVLGTFGFILLNMFLFAPA, AMIGTLILTGIALLIPFA, and LIMVGSLFQVISINPLTY.

Belongs to the AgrB family.

Its subcellular location is the cell membrane. Its function is as follows. May be involved in the proteolytic processing of a quorum sensing system signal molecule precursor. The polypeptide is Putative AgrB-like protein (Listeria monocytogenes serovar 1/2a (strain ATCC BAA-679 / EGD-e)).